Here is a 263-residue protein sequence, read N- to C-terminus: Pheophorbidase (263 aa).

The AB hydrolase-1 domain maps to 13–244 (HFVFVHGASH…LEESDHSAFF (232 aa)). The active-site Acyl-ester intermediate is serine 88. Residues aspartate 212 and histidine 240 each act as charge relay system in the active site.

The protein belongs to the AB hydrolase superfamily. In terms of assembly, homodimer.

The protein localises to the cytoplasm. It carries out the reaction pheophorbide a + H2O + H(+) = pyropheophorbide a + methanol + CO2. Its activity is regulated as follows. Inhibited by methanol and phenylmethylsulfonicfluoride (PMSF). Involved in chlorophyll degradation. Specific for the pheophorbides of the dihydroporphyrin and tetrahydroporphyrin types. Chlorophyllide a, pheophytin a and the nonfluorescent chlorophyll catabolite (NCC) are not used as substrates. The sequence is that of Pheophorbidase (PPD) from Raphanus sativus (Radish).